The following is a 216-amino-acid chain: Adenylate kinase (216 aa).

10–15 (GAGKGT) serves as a coordination point for ATP. The interval 30–59 (STGDIFRYNIKQGTELGKKAKSYMDQGLLV) is NMP. AMP-binding positions include threonine 31, arginine 36, 57–59 (LLV), 85–88 (GFPR), and glutamine 92. An LID region spans residues 126–163 (GRRICRECGATFHVQYNPSTKGALCDQCGGELYQRDDD). Residue arginine 127 coordinates ATP. Residues cysteine 130 and cysteine 133 each coordinate Zn(2+). 136 to 137 (TF) contacts ATP. Zn(2+) is bound by residues cysteine 150 and cysteine 153. AMP is bound by residues arginine 160 and arginine 171. Lysine 199 provides a ligand contact to ATP.

The protein belongs to the adenylate kinase family. In terms of assembly, monomer.

The protein localises to the cytoplasm. It catalyses the reaction AMP + ATP = 2 ADP. The protein operates within purine metabolism; AMP biosynthesis via salvage pathway; AMP from ADP: step 1/1. In terms of biological role, catalyzes the reversible transfer of the terminal phosphate group between ATP and AMP. Plays an important role in cellular energy homeostasis and in adenine nucleotide metabolism. The sequence is that of Adenylate kinase from Alkaliphilus oremlandii (strain OhILAs) (Clostridium oremlandii (strain OhILAs)).